The chain runs to 419 residues: Alpha-galactosidase A (419 aa).

Positions 1–31 are cleaved as a signal peptide; that stretch reads MKLLSRDTRLVCELALCPLALVFWSILGVRA. 2 disulfide bridges follow: Cys52–Cys94 and Cys56–Cys63. A glycan (N-linked (GlcNAc...) asparagine) is linked at Asn139. An intrachain disulfide couples Cys142 to Cys172. Asp170 serves as the catalytic Nucleophile. Position 186 is a phosphotyrosine (Tyr186). Asn192 carries N-linked (GlcNAc...) asparagine glycosylation. Cys202 and Cys223 form a disulfide bridge. 203–207 provides a ligand contact to substrate; sequence EWPLY. Residue Asn215 is glycosylated (N-linked (GlcNAc...) asparagine). Asp231 functions as the Proton donor in the catalytic mechanism. The cysteines at positions 378 and 382 are disulfide-linked.

This sequence belongs to the glycosyl hydrolase 27 family. As to quaternary structure, homodimer.

Its subcellular location is the lysosome. The enzyme catalyses Hydrolysis of terminal, non-reducing alpha-D-galactose residues in alpha-D-galactosides, including galactose oligosaccharides, galactomannans and galactolipids.. The catalysed reaction is a globoside Gb3Cer (d18:1(4E)) + H2O = a beta-D-Gal-(1-&gt;4)-beta-D-Glc-(1&lt;-&gt;1)-Cer(d18:1(4E)) + D-galactose. It catalyses the reaction a globoside Gb3Cer + H2O = a beta-D-galactosyl-(1-&gt;4)-beta-D-glucosyl-(1&lt;-&gt;1)-ceramide + D-galactose. Its activity is regulated as follows. Galactosylgalactosylglucosylceramidase activity is stimulated by saposin B and ammonium chloride. Functionally, catalyzes the hydrolysis of glycosphingolipids and participates in their degradation in the lysosome. The chain is Alpha-galactosidase A from Mus musculus (Mouse).